A 132-amino-acid polypeptide reads, in one-letter code: DNA-directed RNA polymerase subunit omega (132 aa).

Belongs to the RNA polymerase subunit omega family. In terms of assembly, the RNAP catalytic core consists of 2 alpha, 1 beta, 1 beta' and 1 omega subunit. When a sigma factor is associated with the core the holoenzyme is formed, which can initiate transcription.

It catalyses the reaction RNA(n) + a ribonucleoside 5'-triphosphate = RNA(n+1) + diphosphate. In terms of biological role, promotes RNA polymerase assembly. Latches the N- and C-terminal regions of the beta' subunit thereby facilitating its interaction with the beta and alpha subunits. This is DNA-directed RNA polymerase subunit omega from Bartonella bacilliformis (strain ATCC 35685 / KC583 / Herrer 020/F12,63).